The primary structure comprises 333 residues: Calcium uniporter protein, mitochondrial (333 aa).

The N-terminal 22 residues, 1–22 (MRNGRCLVTPFVTAQRLANLRN), are a transit peptide targeting the mitochondrion. Topologically, residues 23-214 (TLWNRQQIAF…QECEAHTDRV (192 aa)) are mitochondrial matrix. Residues 180 to 193 (KKLLLQLENAETLL) adopt a coiled-coil conformation. An outer juxtamembrane helix (OJMH) region spans residues 195–213 (PLHDAKRKIEQECEAHTDR). Residues 215–234 (MWAGFAAMGVQTGLFARLTW) form a helical membrane-spanning segment. The Mitochondrial intermembrane portion of the chain corresponds to 235–243 (WEYSWDIME). The Selectivity filter motif lies at 239-247 (WDIMEPVTY). Glu-243 provides a ligand contact to Ca(2+). A helical membrane pass occupies residues 244–260 (PVTYFATYSTVCATFGY). The Mitochondrial matrix portion of the chain corresponds to 261-333 (YLYTQQSFEY…SYLSNLEAEK (73 aa)). Positions 262–271 (LYTQQSFEYP) are inner juxtamembrane helix (IJMH). Positions 289 to 316 (QNFDIEKYNRLVTEVDELRNQLKRMRDP) form a coiled coil.

The protein belongs to the MCU (TC 1.A.77) family.

The protein resides in the mitochondrion inner membrane. The enzyme catalyses Ca(2+)(in) = Ca(2+)(out). Inhibited by ruthenium red or its derivative Ru360; possibly by obstructing the pore. Its function is as follows. Mitochondrial inner membrane calcium uniporter that mediates calcium uptake into mitochondria. Constitutes a pore-forming and calcium-conducting subunit. Mitochondrial calcium homeostasis plays key roles in cellular physiology and regulates cell bioenergetics, cytoplasmic calcium signals and activation of cell death pathways. Required for rapid mitochondrial calcium uptake and mitochondrial reactive oxygen species (mtROS) production after wounding. In addition, together with mitochondrial calcium regulator micu-1, required for mitochondrial calcium uptake following axon injury in PLM touch receptor neurons. The protein is Calcium uniporter protein, mitochondrial of Caenorhabditis elegans.